The primary structure comprises 138 residues: Lutropin subunit beta (138 aa).

The signal sequence occupies residues 1 to 17 (LQGLLLWLLLSVGGVWA). 6 cysteine pairs are disulfide-bonded: Cys26/Cys74, Cys40/Cys89, Cys43/Cys127, Cys51/Cys105, Cys55/Cys107, and Cys110/Cys117. Asn30 carries an N-linked (GlcNAc...) asparagine glycan.

This sequence belongs to the glycoprotein hormones subunit beta family. In terms of assembly, heterodimer of a common alpha chain and a unique beta chain which confers biological specificity to thyrotropin, lutropin, follitropin and gonadotropin.

It localises to the secreted. Functionally, promotes spermatogenesis and ovulation by stimulating the testes and ovaries to synthesize steroids. The chain is Lutropin subunit beta (LHB) from Canis lupus familiaris (Dog).